The chain runs to 204 residues: Proteasome subunit beta 2 (204 aa).

The propeptide at 1–6 (MEVLPG) is removed in mature form; by autocatalysis. Catalysis depends on Thr-7, which acts as the Nucleophile.

Belongs to the peptidase T1B family. The 20S proteasome core is composed of 14 alpha and 14 beta subunits that assemble into four stacked heptameric rings, resulting in a barrel-shaped structure. The two inner rings, each composed of seven catalytic beta subunits, are sandwiched by two outer rings, each composed of seven alpha subunits. The catalytic chamber with the active sites is on the inside of the barrel. Has a gated structure, the ends of the cylinder being occluded by the N-termini of the alpha-subunits. Is capped at one or both ends by the proteasome regulatory ATPase, PAN.

Its subcellular location is the cytoplasm. It catalyses the reaction Cleavage of peptide bonds with very broad specificity.. The formation of the proteasomal ATPase PAN-20S proteasome complex, via the docking of the C-termini of PAN into the intersubunit pockets in the alpha-rings, triggers opening of the gate for substrate entry. Interconversion between the open-gate and close-gate conformations leads to a dynamic regulation of the 20S proteasome proteolysis activity. Functionally, component of the proteasome core, a large protease complex with broad specificity involved in protein degradation. This Thermofilum pendens (strain DSM 2475 / Hrk 5) protein is Proteasome subunit beta 2.